The primary structure comprises 898 residues: Putative disease resistance protein At1g63350 (898 aa).

A coiled-coil region spans residues 24–88 (VSYTHNLEKN…IESRVNDLLN (65 aa)). The 304-residue stretch at 137–440 (DQASTSEVEE…CEEIIDGSEG (304 aa)) folds into the NB-ARC domain. An ATP-binding site is contributed by 179–186 (GMGGVGKT). LRR repeat units lie at residues 516-537 (VVRRMSLMKNNIAHLDGRLDCM), 538-559 (ELTTLLLQSTHLEKISSEFFNS), 562-584 (KLAVLDLSGNYYLSELPNGISEL), 586-608 (SLQYLNLSSTGIRHLPKGLQELK), 609-631 (KLIHLYLERTSQLGSMVGISCLH), and 632-654 (NLKVLKLSGSSYAWDLDTVKELE).

Belongs to the disease resistance NB-LRR family.

In terms of biological role, potential disease resistance protein. In Arabidopsis thaliana (Mouse-ear cress), this protein is Putative disease resistance protein At1g63350.